The following is a 339-amino-acid chain: Cyclic AMP-dependent transcription factor ATF-4 (339 aa).

Disordered regions lie at residues 14-62 (GPWP…PSEL), 153-182 (PEEI…HTEV), and 209-313 (QNIS…EKAD). Residues 35-55 (VLEGSWSPSSSSLSSFSPPAS) are compositionally biased toward low complexity. The segment covering 162 to 173 (SPAPSVPSPPEE) has biased composition (pro residues). Residues 211 to 226 (ISDCSDSDSGISVSGS) are compositionally biased toward low complexity. The span at 231–247 (SDLEPSSRAKPYSRPDP) shows a compositional bias: basic and acidic residues. Residues 266 to 329 (VEKKLKKMEQ…QYLRDLLEEM (64 aa)) enclose the bZIP domain. A basic motif region spans residues 268-288 (KKLKKMEQNKTAATRYRQKKR). A leucine-zipper region spans residues 294–322 (LNSECSELEKKNRELSEKADSLSREIQYL). The span at 300 to 313 (ELEKKNRELSEKAD) shows a compositional bias: basic and acidic residues.

The protein belongs to the bZIP family. As to quaternary structure, binds DNA as a homodimer and as a heterodimer.

The protein resides in the nucleus. Its function is as follows. Transcription factor that binds the cAMP response element (CRE) (consensus: 5'-GTGACGT[AC][AG]-3') and displays two biological functions, as regulator of metabolic and redox processes under normal cellular conditions, and as master transcription factor during integrated stress response (ISR). Binds to asymmetric CRE's as a heterodimer and to palindromic CRE's as a homodimer. Core effector of the ISR, which is required for adaptation to various stress such as endoplasmic reticulum (ER) stress, amino acid starvation, mitochondrial stress or oxidative stress. During ISR, atf4 translation is induced via an alternative ribosome translation re-initiation mechanism in response to eif2s1/eIF-2-alpha phosphorylation, and stress-induced atf4 acts as a master transcription factor of stress-responsive genes in order to promote cell recovery. Promotes the transcription of genes linked to amino acid sufficiency and resistance to oxidative stress to protect cells against metabolic consequences of ER oxidation. In the absence of stress, atf4 translation is at low levels and it is required for normal metabolic processes such as embryonic lens formation, fetal liver hematopoiesis, bone development and synaptic plasticity. Acts as a regulator of osteoblast differentiation by promoting expression of osteoblast-specific genes. Regulates the circadian expression of the core clock components. Mainly acts as a transcriptional activator in cellular stress adaptation, but it can also act as a transcriptional repressor. This is Cyclic AMP-dependent transcription factor ATF-4 (atf4) from Danio rerio (Zebrafish).